The following is a 73-amino-acid chain: UPF0352 protein HD_1515 (73 aa).

This sequence belongs to the UPF0352 family.

The protein is UPF0352 protein HD_1515 of Haemophilus ducreyi (strain 35000HP / ATCC 700724).